Reading from the N-terminus, the 453-residue chain is Armadillo repeat-containing X-linked protein 1 (453 aa).

Topologically, residues Met1 to Glu6 are mitochondrial intermembrane. Mitochondrion outer membrane (MOM)-targeting sequence regions lie at residues Met1 to Glu6 and Arg26 to Lys36. Residues Ala7–Trp29 form a helical; Signal-anchor membrane-spanning segment. Residues Gly30 to Leu453 lie on the Cytoplasmic side of the membrane. Residues Pro140–Ala182 are disordered. Residues Gly167–Ser177 are compositionally biased toward basic residues. ARM repeat units follow at residues Pro195–Ala235, Ser237–Val276, Pro358–Asp398, and Ser415–Leu453.

It belongs to the eutherian X-chromosome-specific Armcx family. Interacts with MIRO1.

The protein resides in the mitochondrion. The protein localises to the mitochondrion outer membrane. Its function is as follows. Regulates mitochondrial transport during axon regeneration. Increases the proportion of motile mitochondria by recruiting stationary mitochondria into the motile pool. Enhances mitochondria movement and neurite growth in both adult axons and embryonic neurons. Promotes neuronal survival and axon regeneration after nerve injury. May link mitochondria to the Trak1-kinesin motor complex via its interaction with MIRO1. This chain is Armadillo repeat-containing X-linked protein 1 (ARMCX1), found in Pongo abelii (Sumatran orangutan).